A 456-amino-acid polypeptide reads, in one-letter code: ATP synthase subunit beta 1 (456 aa).

152 to 159 (GGAGVGKS) lines the ATP pocket.

Belongs to the ATPase alpha/beta chains family. In terms of assembly, F-type ATPases have 2 components, CF(1) - the catalytic core - and CF(0) - the membrane proton channel. CF(1) has five subunits: alpha(3), beta(3), gamma(1), delta(1), epsilon(1). CF(0) has three main subunits: a(1), b(2) and c(9-12). The alpha and beta chains form an alternating ring which encloses part of the gamma chain. CF(1) is attached to CF(0) by a central stalk formed by the gamma and epsilon chains, while a peripheral stalk is formed by the delta and b chains.

The protein localises to the cell membrane. It carries out the reaction ATP + H2O + 4 H(+)(in) = ADP + phosphate + 5 H(+)(out). Functionally, produces ATP from ADP in the presence of a proton gradient across the membrane. The catalytic sites are hosted primarily by the beta subunits. The polypeptide is ATP synthase subunit beta 1 (Listeria monocytogenes serotype 4b (strain F2365)).